The following is a 193-amino-acid chain: MYSGAYSFVQISTAAYRISITRLEKTMESLQQQVAQLLEQQPTLLPAAMAEQLNVTEFDIVHALPEEMVAVVDGSHAQTILESLPEWGPVTTIMTIAGSIFEVKAPFPKGKVARGYYNLMGRDGELHGHLKLENISHVALVSKPFMGRESHYFGFFTAQGENAFKIYLGRDEKRELIPEQVARFKAMQQQHKQ.

Y116 serves as a coordination point for heme.

In terms of assembly, homodimer. Interacts with HutZ.

Its subcellular location is the cytoplasm. Binds heme. Heme is transferred to the heme-degrading enzyme HutZ via a specific protein-protein interaction. The polypeptide is Intracellular heme transport protein HutX (Vibrio cholerae serotype O1 (strain ATCC 39315 / El Tor Inaba N16961)).